A 289-amino-acid chain; its full sequence is MLKPEWLRVKAPQRERIGAVADLLLDLNLNTVCQEASCPNIGECFAGGTATFLIMGPGCTRACPYCDIDFDKSVRELDPTEPERLGEAVARLGLKHVVITSVNRDDLPDGGATQFVACIEQVKQRSPLTTIELLIPDFCGNWDALATVMAAAPHVLNHNIETVPRMYRLARPQGIYERSLELLQRVRDDWPRAYSKSGLMVGLGETDDEVIDVLRDLRTHRVDIVTIGQYLSPGPKHLAVDRFVTPEQFDTYRRIGEEELGFLQVVSTPLTRSSYHAGEVQRLMASHPR.

[4Fe-4S] cluster is bound by residues Cys33, Cys38, Cys44, Cys59, Cys63, Cys66, and Ser274. The region spanning 45-263 (FAGGTATFLI…RIGEEELGFL (219 aa)) is the Radical SAM core domain.

The protein belongs to the radical SAM superfamily. Lipoyl synthase family. [4Fe-4S] cluster is required as a cofactor.

The protein localises to the cytoplasm. It carries out the reaction [[Fe-S] cluster scaffold protein carrying a second [4Fe-4S](2+) cluster] + N(6)-octanoyl-L-lysyl-[protein] + 2 oxidized [2Fe-2S]-[ferredoxin] + 2 S-adenosyl-L-methionine + 4 H(+) = [[Fe-S] cluster scaffold protein] + N(6)-[(R)-dihydrolipoyl]-L-lysyl-[protein] + 4 Fe(3+) + 2 hydrogen sulfide + 2 5'-deoxyadenosine + 2 L-methionine + 2 reduced [2Fe-2S]-[ferredoxin]. It functions in the pathway protein modification; protein lipoylation via endogenous pathway; protein N(6)-(lipoyl)lysine from octanoyl-[acyl-carrier-protein]: step 2/2. Functionally, catalyzes the radical-mediated insertion of two sulfur atoms into the C-6 and C-8 positions of the octanoyl moiety bound to the lipoyl domains of lipoate-dependent enzymes, thereby converting the octanoylated domains into lipoylated derivatives. The polypeptide is Lipoyl synthase 1 (Parasynechococcus marenigrum (strain WH8102)).